The primary structure comprises 142 residues: DNA-directed RNA polymerase II subunit RPB4 (142 aa).

Belongs to the eukaryotic RPB4 RNA polymerase subunit family. As to quaternary structure, component of the RNA polymerase II (Pol II) core complex consisting of 12 subunits: a ten-subunit catalytic core composed of POLR2A/RPB1, POLR2B/RPB2, POLR2C/RPB3, POLR2I/RPB9, POLR2J/RPB11, POLR2E/RPABC1, POLR2F/RPABC2, POLR2H/RPABC3, POLR2K/RPABC4 and POLR2L/RPABC5 and a mobile stalk composed of two subunits POLR2D/RPB4 and POLR2G/RPB7, protruding from the core and functioning primarily in transcription initiation. Part of Pol II(G) complex, in which Pol II core associates with an additional subunit POLR2M; unlike conventional Pol II, Pol II(G) functions as a transcriptional repressor. Part of Pol II pre-initiation complex (PIC), in which Pol II core assembles with Mediator, general transcription factors and other specific initiation factors including GTF2E1, GTF2E2, GTF2F1, GTF2F2, TCEA1, ERCC2, ERCC3, GTF2H2, GTF2H3, GTF2H4, GTF2H5, GTF2A1, GTF2A2, GTF2B and TBP; this large multi-subunit PIC complex mediates DNA unwinding and targets Pol II core to the transcription start site where the first phosphodiester bond forms.

It localises to the nucleus. In terms of biological role, core component of RNA polymerase II (Pol II), a DNA-dependent RNA polymerase which synthesizes mRNA precursors and many functional non-coding RNAs using the four ribonucleoside triphosphates as substrates. Pol II is the central component of the basal RNA polymerase II transcription machinery. It is composed of mobile elements that move relative to each other. POLR2D/RPB4 is part of a subcomplex with POLR2G/RPB7 that binds to a pocket formed by POLR2A/RPB1, POLR2B/RPB2 and POLR2F/RPABC2 at the base of the clamp element. The POLR2D/RPB4-POLR2G/RPB7 subcomplex seems to lock the clamp via POLR2G/RPB7 in the closed conformation thus preventing double-stranded DNA to enter the active site cleft. The POLR2D/RPB4-POLR2G/RPB7 subcomplex binds single-stranded DNA and RNA. This is DNA-directed RNA polymerase II subunit RPB4 (POLR2D) from Bos taurus (Bovine).